Here is a 359-residue protein sequence, read N- to C-terminus: Phosphoserine aminotransferase (359 aa).

R41 contributes to the L-glutamate binding site. Residues 75 to 76 (AS), W101, T151, D171, and Q194 contribute to the pyridoxal 5'-phosphate site. K195 is subject to N6-(pyridoxal phosphate)lysine. Residue 236-237 (NT) participates in pyridoxal 5'-phosphate binding.

The protein belongs to the class-V pyridoxal-phosphate-dependent aminotransferase family. SerC subfamily. As to quaternary structure, homodimer. Pyridoxal 5'-phosphate is required as a cofactor.

The protein resides in the cytoplasm. The enzyme catalyses O-phospho-L-serine + 2-oxoglutarate = 3-phosphooxypyruvate + L-glutamate. It catalyses the reaction 4-(phosphooxy)-L-threonine + 2-oxoglutarate = (R)-3-hydroxy-2-oxo-4-phosphooxybutanoate + L-glutamate. It participates in amino-acid biosynthesis; L-serine biosynthesis; L-serine from 3-phospho-D-glycerate: step 2/3. The protein operates within cofactor biosynthesis; pyridoxine 5'-phosphate biosynthesis; pyridoxine 5'-phosphate from D-erythrose 4-phosphate: step 3/5. In terms of biological role, catalyzes the reversible conversion of 3-phosphohydroxypyruvate to phosphoserine and of 3-hydroxy-2-oxo-4-phosphonooxybutanoate to phosphohydroxythreonine. The protein is Phosphoserine aminotransferase of Thiobacillus denitrificans (strain ATCC 25259 / T1).